The following is a 140-amino-acid chain: Methylglyoxal synthase (140 aa).

An MGS-like domain is found at 1-140; that stretch reads MKIALIAHDR…HDQDSNPINL (140 aa). Residues H8, K12, 34 to 37, and 54 to 55 contribute to the substrate site; these read TGTT and SG. D60 functions as the Proton donor/acceptor in the catalytic mechanism. A substrate-binding site is contributed by H87.

Belongs to the methylglyoxal synthase family.

The catalysed reaction is dihydroxyacetone phosphate = methylglyoxal + phosphate. In terms of biological role, catalyzes the formation of methylglyoxal from dihydroxyacetone phosphate. This Latilactobacillus sakei subsp. sakei (strain 23K) (Lactobacillus sakei subsp. sakei) protein is Methylglyoxal synthase.